Here is a 340-residue protein sequence, read N- to C-terminus: Protein-arginine kinase (340 aa).

The region spanning 21–242 (VVLSSRIRLA…EQIIMQERVA (222 aa)) is the Phosphagen kinase C-terminal domain. Residues 24–28 (SSRIR), His79, Arg113, 164–168 (RASVM), and 195–200 (RGIYGE) contribute to the ATP site.

The protein belongs to the ATP:guanido phosphotransferase family.

It carries out the reaction L-arginyl-[protein] + ATP = N(omega)-phospho-L-arginyl-[protein] + ADP + H(+). Functionally, catalyzes the specific phosphorylation of arginine residues in proteins. This is Protein-arginine kinase from Listeria monocytogenes serovar 1/2a (strain ATCC BAA-679 / EGD-e).